We begin with the raw amino-acid sequence, 201 residues long: uncharacterized protein (201 aa).

Residues Lys15 to Gly122 form the Bro-N domain.

This is an uncharacterized protein from Haemophilus influenzae (strain ATCC 51907 / DSM 11121 / KW20 / Rd).